We begin with the raw amino-acid sequence, 425 residues long: L-cysteine:1D-myo-inositol 2-amino-2-deoxy-alpha-D-glucopyranoside ligase (425 aa).

Residue cysteine 43 participates in Zn(2+) binding. L-cysteinyl-5'-AMP is bound by residues cysteine 43–threonine 46, threonine 58, and asparagine 81–threonine 83. The 'HIGH' region motif lies at isoleucine 45–histidine 55. The 'ERGGDP' region motif lies at glutamate 195 to proline 200. Residue tryptophan 236 participates in L-cysteinyl-5'-AMP binding. Cysteine 240 serves as a coordination point for Zn(2+). Glycine 258–aspartate 260 contributes to the L-cysteinyl-5'-AMP binding site. Histidine 265 serves as a coordination point for Zn(2+). An L-cysteinyl-5'-AMP-binding site is contributed by valine 295. Positions lysine 301–serine 305 match the 'KMSKS' region motif.

Belongs to the class-I aminoacyl-tRNA synthetase family. MshC subfamily. As to quaternary structure, monomer. It depends on Zn(2+) as a cofactor.

It carries out the reaction 1D-myo-inositol 2-amino-2-deoxy-alpha-D-glucopyranoside + L-cysteine + ATP = 1D-myo-inositol 2-(L-cysteinylamino)-2-deoxy-alpha-D-glucopyranoside + AMP + diphosphate + H(+). Catalyzes the ATP-dependent condensation of GlcN-Ins and L-cysteine to form L-Cys-GlcN-Ins. The sequence is that of L-cysteine:1D-myo-inositol 2-amino-2-deoxy-alpha-D-glucopyranoside ligase from Sanguibacter keddieii (strain ATCC 51767 / DSM 10542 / NCFB 3025 / ST-74).